We begin with the raw amino-acid sequence, 402 residues long: Major outer membrane porin (402 aa).

The N-terminal stretch at 1-22 (MKKLLKSALLFAATGSALSLQA) is a signal peptide.

The protein belongs to the chlamydial porin (CP) (TC 1.B.2) family. In terms of assembly, part of a disulfide cross-linked outer membrane complex (COMC) composed of the major outer membrane porin, the small cysteine-rich protein (OmcA) and the large cysteine-rich periplasmic protein (OmcB).

Its subcellular location is the cell outer membrane. Its function is as follows. In elementary bodies (EBs, the infectious stage, which is able to survive outside the host cell) provides the structural integrity of the outer envelope through disulfide cross-links with the small cysteine-rich protein and the large cysteine-rich periplasmic protein. It has been described in publications as the Sarkosyl-insoluble COMC (Chlamydia outer membrane complex), and serves as the functional equivalent of peptidoglycan. Permits diffusion of specific solutes through the outer membrane. In Chlamydia psittaci (Chlamydophila psittaci), this protein is Major outer membrane porin (ompA).